Consider the following 103-residue polypeptide: Trp operon repressor homolog (103 aa).

A DNA-binding region spans residues 62–85; it reads QRKISELLGVGVATITRGSNELKH.

Belongs to the TrpR family. Homodimer.

Its subcellular location is the cytoplasm. This protein is an aporepressor. When complexed with L-tryptophan it binds the operator region of the trp operon and prevents the initiation of transcription. The polypeptide is Trp operon repressor homolog (Photobacterium profundum (strain SS9)).